The sequence spans 622 residues: Cilia- and flagella-associated protein 206 (622 aa).

The disordered stretch occupies residues 568–593; the sequence is NTSQVYPLKEASTQSKREGSSRVPRP.

This sequence belongs to the CFAP206 family. In terms of tissue distribution, expressed in the sperm, oviduct, lung, nasal cavity, brain ependyma and choroid plexus.

The protein localises to the cytoplasm. Its subcellular location is the cytoskeleton. The protein resides in the cilium axoneme. It is found in the cilium basal body. In terms of biological role, essential for sperm motility and is involved in the regulation of the beating frequency of motile cilia on the epithelial cells of the respiratory tract. Required for the establishment of radial spokes in sperm flagella. This is Cilia- and flagella-associated protein 206 from Mus musculus (Mouse).